The chain runs to 224 residues: Myogenin (224 aa).

Phosphoserine; by CaMK2G occurs at positions 77 and 79. The region spanning 81–132 is the bHLH domain; sequence DRRRAATLREKRRLKKVNEAFEALKRSTLLNPNQRLPKVEILRSAIQYIERL. Thr-87 is modified (phosphothreonine; by CaMK2G).

As to quaternary structure, homodimer and heterodimer with E12; heterodimerization enhances MYOG DNA-binding and transcriptional activities. Interacts with SMARCA4/BRG1/BAF190A. Interacts (via C-terminal region) with SSRP1 and SUPT16H; the interaction is indicative of an interaction with the FACT complex. nteracts with CSRP3. Post-translationally, phosphorylated by CAMK2G on threonine and serine amino acids in a muscle activity-dependent manner. Phosphorylation of Thr-87 impairs both DNA-binding and trans-activation functions in contracting muscles. In terms of tissue distribution, expressed in myoblast cells. Expressed weakly in myotubes (at protein level). Expressed strongly in denervated muscles and in satellite cells isolated from denervated muscles. Expressed weakly in innervated muscle and in satellite cells isolated from innervated muscles.

It is found in the nucleus. Acts as a transcriptional activator that promotes transcription of muscle-specific target genes and plays a role in muscle differentiation, cell cycle exit and muscle atrophy. Essential for the development of functional embryonic skeletal fiber muscle differentiation. However is dispensable for postnatal skeletal muscle growth; phosphorylation by CAMK2G inhibits its transcriptional activity in respons to muscle activity. Required for the recruitment of the FACT complex to muscle-specific promoter regions, thus promoting gene expression initiation. During terminal myoblast differentiation, plays a role as a strong activator of transcription at loci with an open chromatin structure previously initiated by MYOD1. Together with MYF5 and MYOD1, co-occupies muscle-specific gene promoter core regions during myogenesis. Also cooperates with myocyte-specific enhancer factor MEF2D and BRG1-dependent recruitment of SWI/SNF chromatin-remodeling enzymes to alter chromatin structure at myogenic late gene promoters. Facilitates cell cycle exit during terminal muscle differentiation through the up-regulation of miR-20a expression, which in turn represses genes involved in cell cycle progression. Binds to the E-box containing (E1) promoter region of the miR-20a gene. Also plays a role in preventing reversal of muscle cell differentiation. Contributes to the atrophy-related gene expression in adult denervated muscles. Induces fibroblasts to differentiate into myoblasts. The polypeptide is Myogenin (Myog) (Mus musculus (Mouse)).